A 47-amino-acid chain; its full sequence is Snake venom metalloproteinase jararafibrase-4 (47 aa).

Residues 6–47 (RYIELFLVVDHGMFMKYNGNSDKIYYYIHQMVNIMKXAYXYL) form the Peptidase M12B domain. E9 is a binding site for Ca(2+).

The protein belongs to the venom metalloproteinase (M12B) family. In terms of assembly, monomer. Zn(2+) is required as a cofactor. As to expression, expressed by the venom gland.

The protein localises to the secreted. Inhibited by 1,10-phenanthroline and EDTA. Functionally, the metalloproteinase is a probable venom zinc protease that induces local hemorrhage in the skin of rats. Degrades type-IV collagen, gelatin, laminin and fibronectin. Has fibrinolytic activities. Has high hemagglutinating activity on red blood cells. Cleaves insulin B chain at 29-His-|-Leu-30, and 38-Ala-|-Leu-39 bonds. The protein is Snake venom metalloproteinase jararafibrase-4 of Bothrops jararaca (Jararaca).